A 769-amino-acid chain; its full sequence is Discoidin, CUB and LCCL domain-containing protein 2 (769 aa).

The segment covering 1-29 (MASRAPLRAARSPQDPGGRAAPAATGRAP) has biased composition (low complexity). Residues 1 to 39 (MASRAPLRAARSPQDPGGRAAPAATGRAPLPSAGWCPLP) form a disordered region. The N-terminal stretch at 1-63 (MASRAPLRAA…LLLLLPDAGA (63 aa)) is a signal peptide. The Extracellular portion of the chain corresponds to 64-523 (QKGDGCGHTV…VTPSVTKDVA (460 aa)). Intrachain disulfides connect C69/C96 and C123/C145. A CUB domain is found at 69–184 (CGHTVLGPES…RGFLASYSVI (116 aa)). N92 is a glycosylation site (N-linked (GlcNAc...) asparagine). An N-linked (GlcNAc...) asparagine glycan is attached at N152. The 99-residue stretch at 184–282 (IDKQDLITCL…MVGYLSTSLF (99 aa)) folds into the LCCL domain. C212 and C234 form a disulfide bridge. Residue N269 is glycosylated (N-linked (GlcNAc...) asparagine). C289 and C446 form a disulfide bridge. The 158-residue stretch at 289–446 (CYGTLGMESG…IAMKVELLGC (158 aa)) folds into the F5/8 type C domain. Residues 455–476 (PKLTQPPPPRNSNNLKNTTVHP) are disordered. A compositionally biased stretch (polar residues) spans 465–474 (NSNNLKNTTV). Residues N471 and N511 are each glycosylated (N-linked (GlcNAc...) asparagine). Residues 524–544 (LAAVLVPVLVMALTTLILILV) traverse the membrane as a helical segment. Residues 545 to 769 (CAWHWRNRKK…EKFDAFKETL (225 aa)) lie on the Cytoplasmic side of the membrane. S601 bears the Phosphoserine mark. The tract at residues 719–769 (SCSSGQAQYDTPKGGKPAAAPEELVYQVPQSTQEASGAGRDEKFDAFKETL) is disordered. Residues 757 to 769 (GRDEKFDAFKETL) are compositionally biased toward basic and acidic residues.

It localises to the membrane. The chain is Discoidin, CUB and LCCL domain-containing protein 2 (Dcbld2) from Rattus norvegicus (Rat).